The primary structure comprises 410 residues: Peptidase T (410 aa).

Zn(2+) is bound at residue H78. Residue D80 is part of the active site. D139 lines the Zn(2+) pocket. Residue E173 is the Proton acceptor of the active site. The Zn(2+) site is built by E174, D196, and H378.

Belongs to the peptidase M20B family. It depends on Zn(2+) as a cofactor.

The protein resides in the cytoplasm. It carries out the reaction Release of the N-terminal residue from a tripeptide.. Its function is as follows. Cleaves the N-terminal amino acid of tripeptides. The sequence is that of Peptidase T from Shewanella woodyi (strain ATCC 51908 / MS32).